The chain runs to 348 residues: Serine/threonine-protein kinase SBK2 (348 aa).

The tract at residues 1–25 (MPGKQSEEGPAEAGASEDSEEEGLG) is disordered. A Protein kinase domain is found at 62-330 (YEEVRPLGQG…IREHLGRPWR (269 aa)). ATP-binding positions include 68-76 (LGQGCYGRV) and K91. The Proton acceptor role is filled by D183.

The protein belongs to the protein kinase superfamily. Ser/Thr protein kinase family. STKL subfamily.

The enzyme catalyses L-seryl-[protein] + ATP = O-phospho-L-seryl-[protein] + ADP + H(+). The catalysed reaction is L-threonyl-[protein] + ATP = O-phospho-L-threonyl-[protein] + ADP + H(+). This chain is Serine/threonine-protein kinase SBK2 (SBK2), found in Homo sapiens (Human).